The chain runs to 113 residues: uncharacterized protein (113 aa).

The disordered stretch occupies residues 78–113; it reads YCNRGSERTNQGNRGSAPSKILLPRTIADPFRGGPE.

This is an uncharacterized protein from Halobacterium phage phiH (Bacteriophage phi-H).